A 589-amino-acid polypeptide reads, in one-letter code: MGLGSSQPSTKEAEPCTLQEKEEHPVDDTRQQNNAVPATVSDPDQVSPAVQDAETQVESIVDKRKNKKGKTEYLVRWKGYDSEDDTWEPEQHLVNCEEYIHDFNRRHNERQKEGTLARANRASPSNARKQISRSTHSALSKTNPKALVVGKDHESKTNQLLATSQKFRKNTAPSLANRKNMDLAKSGIKILVPKSPIKGRTSIDGFHGESPEKLDQGAEDTVTPEVTAEKPTGALLGPGAERARMGSRPRIHSLVPQVSGPVTAAMATTLAVNGKGTSPFMDALTANGTVTIQTSVTGVTAGKRKFIDDRRDQPFDKRLRFSVRQTESAYRYRDIVVRKQDGFTHILLSTKSSENNSLNPEVMKEVQSALSTAAADDSKLVLLSAVGSVFCCGLDFIYFIRRLTDDRKRESTKMAEAIRNFVNTFIQFKKPIIVAVNGPAIGLGASILPLCDVVWANEKAWFQTPYTTFGQSPDGCSTVMFPKIMGGASANEMLLSGRKLTAQEACGKGLVSQVFWPGTFTQEVMVRIKELASCNPIVLEESKALVRCNMKMELEQANERECDALKKIWGSAQGMDSMLKYLQRKIDEF.

Residues 1–10 (MGLGSSQPST) are compositionally biased toward polar residues. The disordered stretch occupies residues 1–57 (MGLGSSQPSTKEAEPCTLQEKEEHPVDDTRQQNNAVPATVSDPDQVSPAVQDAETQV). The span at 11–30 (KEAEPCTLQEKEEHPVDDTR) shows a compositional bias: basic and acidic residues. The Chromo domain maps to 55–115 (TQVESIVDKR…RHNERQKEGT (61 aa)). The interaction with EZH2 stretch occupies residues 55–300 (TQVESIVDKR…TIQTSVTGVT (246 aa)). A Phosphoserine modification is found at Ser-82. The interval 110–155 (RQKEGTLARANRASPSNARKQISRSTHSALSKTNPKALVVGKDHES) is disordered. Residues 117 to 128 (ARANRASPSNAR) are compositionally biased toward low complexity. The residue at position 129 (Lys-129) is an N6,N6,N6-trimethyllysine; by EHMT2; alternate. The residue at position 129 (Lys-129) is an N6,N6-dimethyllysine; by EHMT2; alternate. Residue Lys-129 is modified to N6-methyllysine; by EHMT2; alternate. A compositionally biased stretch (polar residues) spans 132 to 143 (SRSTHSALSKTN). Ser-164, Ser-195, and Ser-210 each carry phosphoserine. The disordered stretch occupies residues 202–224 (SIDGFHGESPEKLDQGAEDTVTP). Residues 206–216 (FHGESPEKLDQ) are compositionally biased toward basic and acidic residues. An acetyl-CoA-binding domain region spans residues 353-585 (SENNSLNPEV…DSMLKYLQRK (233 aa)).

As to quaternary structure, forms multimers and multimerization is required for stable binding to chromatin. Interacts with HDAC1 and HDAC2 via its C-terminal acetyl-CoA-binding domain. Interacts with EZH2, EED, SUZ12, REST, EHMT1 and EHMT2. Part of a complex containing at least CDYL, REST, WIZ, SETB1, EHMT1 and EHMT2. Part of a complex containing at least CDYL, MIER1, MIER2, HDAC1 and HDAC2. Interacts with CHAF1A and CHAF1B; bridging the CAF-1 complex to the MCM2-7 (MCM) complex. Interacts with MCM3 and MCM5; bridging the CAF-1 complex to the MCM2-7 (MCM) complex. Recruited to Xist RNA-coated X chromosome. Interacts with EHMT2 and PRDM9; interaction only takes place when PRDM9 is bound to hotspot DNA. In terms of tissue distribution, expressed in the brain, with expression in the hippocampal dentate gyrus, CA1, striatum and cortex (at protein level). Expressed in the prelimbic cortex.

It is found in the nucleus. Its subcellular location is the chromosome. It catalyses the reaction 3-hydroxybutanoyl-CoA = (2E)-butenoyl-CoA + H2O. Its function is as follows. Chromatin reader protein that recognizes and binds histone H3 trimethylated at 'Lys-9', dimethylated at 'Lys-27' and trimethylated at 'Lys-27' (H3K9me3, H3K27me2 and H3K27me3, respectively). Part of multimeric repressive chromatin complexes, where it is required for transmission and restoration of repressive histone marks, thereby preserving the epigenetic landscape. Required for chromatin targeting and maximal enzymatic activity of Polycomb repressive complex 2 (PRC2); acts as a positive regulator of PRC2 activity by bridging the pre-existing histone H3K27me3 and newly recruited PRC2 on neighboring nucleosomes. Acts as a corepressor for REST by facilitating histone-lysine N-methyltransferase EHMT2 recruitment and H3K9 dimethylation at REST target genes for repression. Involved in X chromosome inactivation in females: recruited to Xist RNA-coated X chromosome and facilitates propagation of H3K9me2 by anchoring EHMT2. Promotes EZH2 accumulation and H3K27me3 methylation at DNA double strand breaks (DSBs), thereby facilitating transcriptional repression at sites of DNA damage and homology-directed repair of DSBs. Required for neuronal migration during brain development by repressing expression of RHOA. By repressing the expression of SCN8A, contributes to the inhibition of intrinsic neuronal excitability and epileptogenesis. In addition to acting as a chromatin reader, acts as a hydro-lyase. Shows crotonyl-coA hydratase activity by mediating the conversion of crotonyl-CoA ((2E)-butenoyl-CoA) to beta-hydroxybutyryl-CoA (3-hydroxybutanoyl-CoA), thereby acting as a negative regulator of histone crotonylation. Histone crotonylation is required during spermatogenesis; down-regulation of histone crotonylation by CDYL regulates the reactivation of sex chromosome-linked genes in round spermatids and histone replacement in elongating spermatids. By regulating histone crotonylation and trimethylation of H3K27, may be involved in stress-induced depression-like behaviors, possibly by regulating VGF expression. Displays acetyltransferase activity toward tubulin in vitro; such activity is however unsure in vivo and additional evidences would be required to confirm this result. Not able to recognize and bind histone H3K9me3, histone H3K27me2 and histone H3K27me3, due to the presence of a N-terminal extension that inactivates the chromo domain. The sequence is that of Chromodomain Y-like protein from Rattus norvegicus (Rat).